The chain runs to 540 residues: Gamma-cadinene synthase (540 aa).

The Mg(2+) site is built by D292, D296, D436, S440, and E444. The short motif at 292–296 (DDTYD) is the DDXXD motif element.

The protein belongs to the terpene synthase family. Requires Mg(2+) as cofactor. The cofactor is Mn(2+).

The catalysed reaction is (2E,6E)-farnesyl diphosphate = (+)-gamma-cadinene + diphosphate. The protein operates within secondary metabolite biosynthesis; terpenoid biosynthesis. Sesquiterpene synthase that catalyzes the cyclization of trans,trans-farnesyl diphosphate (FPP) to gamma cadinene. This chain is Gamma-cadinene synthase (CDS), found in Ocimum basilicum (Sweet basil).